The sequence spans 188 residues: GMP synthase [glutamine-hydrolyzing] subunit A (188 aa).

A Glutamine amidotransferase type-1 domain is found at Lys2 to Lys188. Cys79 acts as the Nucleophile in catalysis. Catalysis depends on residues His166 and Glu168.

In terms of assembly, heterodimer composed of a glutamine amidotransferase subunit (A) and a GMP-binding subunit (B).

It carries out the reaction XMP + L-glutamine + ATP + H2O = GMP + L-glutamate + AMP + diphosphate + 2 H(+). It functions in the pathway purine metabolism; GMP biosynthesis; GMP from XMP (L-Gln route): step 1/1. Functionally, catalyzes the synthesis of GMP from XMP. This is GMP synthase [glutamine-hydrolyzing] subunit A from Saccharolobus solfataricus (strain ATCC 35092 / DSM 1617 / JCM 11322 / P2) (Sulfolobus solfataricus).